We begin with the raw amino-acid sequence, 189 residues long: GMP synthase [glutamine-hydrolyzing] subunit A (189 aa).

The 185-residue stretch at 5–189 folds into the Glutamine amidotransferase type-1 domain; the sequence is KILVVNNYGQ…TNFFEVCDRY (185 aa). The active-site Nucleophile is the Cys79. Active-site residues include His166 and Glu168.

In terms of assembly, heterodimer composed of a glutamine amidotransferase subunit (A) and a GMP-binding subunit (B).

It catalyses the reaction XMP + L-glutamine + ATP + H2O = GMP + L-glutamate + AMP + diphosphate + 2 H(+). The protein operates within purine metabolism; GMP biosynthesis; GMP from XMP (L-Gln route): step 1/1. In terms of biological role, catalyzes the synthesis of GMP from XMP. The chain is GMP synthase [glutamine-hydrolyzing] subunit A from Methanosarcina acetivorans (strain ATCC 35395 / DSM 2834 / JCM 12185 / C2A).